A 207-amino-acid chain; its full sequence is Phenazine biosynthesis protein PhzD1 (207 aa).

The active-site Proton donor is aspartate 38. Substrate-binding positions include glutamine 78, arginine 87, lysine 122, and 151 to 155 (YAHVG).

It belongs to the isochorismatase family. In terms of assembly, homodimer.

It carries out the reaction (2S)-2-amino-4-deoxychorismate + H2O = (5S,6S)-6-amino-5-hydroxycyclohexa-1,3-diene-1-carboxyate + pyruvate. It participates in antibiotic biosynthesis; phenazine biosynthesis. Involved in the biosynthesis of the antibiotic phenazine, a nitrogen-containing heterocyclic molecule. PhzD1 (operon phzA1B1C1E1F1G1) has a role in the biosynthesis of the phenazine during planktonic growth. Catalyzes the hydrolysis of the vinyl ether functional group of 2-amino-2-deoxyisochorismate (ADIC), yielding pyruvate and trans-2,3-dihydro-3-hydroxyanthranilic acid (DHHA). Also able to act on isochorismate, chorismate and 4-amino-4-deoxychorismate (ADC) as substrates. In Pseudomonas aeruginosa (strain ATCC 15692 / DSM 22644 / CIP 104116 / JCM 14847 / LMG 12228 / 1C / PRS 101 / PAO1), this protein is Phenazine biosynthesis protein PhzD1.